The primary structure comprises 149 residues: D-aminoacyl-tRNA deacylase (149 aa).

The short motif at 137–138 is the Gly-cisPro motif, important for rejection of L-amino acids element; it reads GP.

Belongs to the DTD family. As to quaternary structure, homodimer.

The protein localises to the cytoplasm. The enzyme catalyses glycyl-tRNA(Ala) + H2O = tRNA(Ala) + glycine + H(+). It catalyses the reaction a D-aminoacyl-tRNA + H2O = a tRNA + a D-alpha-amino acid + H(+). An aminoacyl-tRNA editing enzyme that deacylates mischarged D-aminoacyl-tRNAs. Also deacylates mischarged glycyl-tRNA(Ala), protecting cells against glycine mischarging by AlaRS. Acts via tRNA-based rather than protein-based catalysis; rejects L-amino acids rather than detecting D-amino acids in the active site. By recycling D-aminoacyl-tRNA to D-amino acids and free tRNA molecules, this enzyme counteracts the toxicity associated with the formation of D-aminoacyl-tRNA entities in vivo and helps enforce protein L-homochirality. The sequence is that of D-aminoacyl-tRNA deacylase from Koribacter versatilis (strain Ellin345).